A 128-amino-acid polypeptide reads, in one-letter code: B2 protein (128 aa).

The first 10 residues, 1-10 (SLILLVAVQA), serve as a signal peptide directing secretion. 2 disulfides stabilise this stretch: Cys26–Cys57 and Cys97–Cys114.

The protein belongs to the PBP/GOBP family. In terms of processing, N-glycosylated. As to expression, tubular accessory sex gland.

It localises to the secreted. Its function is as follows. May be a carrier protein for lipids. The polypeptide is B2 protein (Tenebrio molitor (Yellow mealworm beetle)).